The primary structure comprises 26 residues: Conotoxin Eb6.18 (26 aa).

Intrachain disulfides connect Cys-7–Cys-18 and Cys-13–Cys-25.

It belongs to the conotoxin O1 superfamily. Expressed by the venom duct.

It localises to the secreted. The sequence is that of Conotoxin Eb6.18 (E1) from Conus ebraeus (Hebrew cone).